Consider the following 78-residue polypeptide: Probable [Fe-S]-dependent transcriptional repressor (78 aa).

The iron-sulfur cluster site is built by Cys56, Cys61, Cys64, and Cys70.

The protein belongs to the FeoC family.

May function as a transcriptional regulator that controls feoABC expression. This is Probable [Fe-S]-dependent transcriptional repressor from Enterobacter sp. (strain 638).